A 510-amino-acid chain; its full sequence is MDIRAAEISAILKDQIKNFGEEAEVSEVGQVLSVGDGIARAYGLDNVQAGEMVEFESGVRGMALNLEQDNVGIVIFGSDREIKEGQTVKRTGAIVDVPVGKGLLGRVVDALGNPIDGKGPIQSTERRRVDVKAPGIIPRKSVHEPMATGLKAIDALIPVGRGQRELIIGDRQTGKTAIALDTILNQKPGHTAGGDEKAKLYCIYVAIGQKRSTVAQFVKVLEDQGALEYSIVIAATASDAAPMQFIAPFAGCAMGEYFRDNGMHAVIVYDDLSKQAVAYRQMSLLLRRPPGREAYPGDVFYLHSRLLERAAKMGDAAGAGSLTALPVIETQANDVSAYIPTNVISITDGQIFLETDLFYQGVRPAVNVGLSVSRVGSSAQTKAMKKVAGKIKGELAQYREMAAFAQFGSDLDASTQALLNRGSRLTELLKQPQFSPLKMEEQVAVIYAGVNGYLDKLPVTKVRAFEDSLLSTLRSKHKDLLDSIAASKDLSDENAGKLKSVVESVAKSIG.

Residue 169 to 176 (GDRQTGKT) participates in ATP binding.

The protein belongs to the ATPase alpha/beta chains family. In terms of assembly, F-type ATPases have 2 components, CF(1) - the catalytic core - and CF(0) - the membrane proton channel. CF(1) has five subunits: alpha(3), beta(3), gamma(1), delta(1), epsilon(1). CF(0) has three main subunits: a(1), b(2) and c(9-12). The alpha and beta chains form an alternating ring which encloses part of the gamma chain. CF(1) is attached to CF(0) by a central stalk formed by the gamma and epsilon chains, while a peripheral stalk is formed by the delta and b chains.

It localises to the cell inner membrane. It carries out the reaction ATP + H2O + 4 H(+)(in) = ADP + phosphate + 5 H(+)(out). In terms of biological role, produces ATP from ADP in the presence of a proton gradient across the membrane. The alpha chain is a regulatory subunit. The polypeptide is ATP synthase subunit alpha (Methylobacterium radiotolerans (strain ATCC 27329 / DSM 1819 / JCM 2831 / NBRC 15690 / NCIMB 10815 / 0-1)).